The chain runs to 122 residues: Small ribosomal subunit protein uS13 (122 aa).

Positions 93–122 (RRGLPVRGQKTKTNARTRKGPKKTMANKKK) are disordered.

It belongs to the universal ribosomal protein uS13 family. As to quaternary structure, part of the 30S ribosomal subunit. Forms a loose heterodimer with protein S19. Forms two bridges to the 50S subunit in the 70S ribosome.

In terms of biological role, located at the top of the head of the 30S subunit, it contacts several helices of the 16S rRNA. In the 70S ribosome it contacts the 23S rRNA (bridge B1a) and protein L5 of the 50S subunit (bridge B1b), connecting the 2 subunits; these bridges are implicated in subunit movement. Contacts the tRNAs in the A and P-sites. This Clostridium botulinum (strain Alaska E43 / Type E3) protein is Small ribosomal subunit protein uS13.